Here is a 355-residue protein sequence, read N- to C-terminus: Alanine racemase (355 aa).

Lys34 serves as the catalytic Proton acceptor; specific for D-alanine. Lys34 is modified (N6-(pyridoxal phosphate)lysine). Arg133 is a substrate binding site. The active-site Proton acceptor; specific for L-alanine is the Tyr249. A substrate-binding site is contributed by Met297.

The protein belongs to the alanine racemase family. The cofactor is pyridoxal 5'-phosphate.

It carries out the reaction L-alanine = D-alanine. It functions in the pathway amino-acid biosynthesis; D-alanine biosynthesis; D-alanine from L-alanine: step 1/1. Catalyzes the interconversion of L-alanine and D-alanine. May also act on other amino acids. The protein is Alanine racemase (alr) of Rickettsia rickettsii (strain Sheila Smith).